Reading from the N-terminus, the 109-residue chain is MASQREENSTQMQNEVVELAYSLARCKLENLLNKSMRIRMTDGRTLVGLFLCTDRDCNVILGSAQEFLKSTDSLSQGEPRVLGLAMIPGHHVVSIEVETESLQTTTHGL.

The 79-residue stretch at 23–101 folds into the Sm domain; the sequence is LARCKLENLL…VVSIEVETES (79 aa).

The protein belongs to the snRNP Sm proteins family. Component of the N-terminal acetyltransferase C (NatC) complex.

It localises to the cytoplasm. It is found in the nucleus. In terms of biological role, auxillary component of the N-terminal acetyltransferase C (NatC) complex which catalyzes acetylation of N-terminal methionine residues. N-terminal acetylation protects proteins from ubiquitination and degradation by the N-end rule pathway. In Danio rerio (Zebrafish), this protein is N-alpha-acetyltransferase 38, NatC auxiliary subunit (naa38).